The sequence spans 454 residues: Protein odr-4 homolog (454 aa).

2 consecutive transmembrane segments (helical) span residues 82–102 and 432–452; these read MLPG…ELAN and IGVI…FHYF.

Belongs to the ODR-4 family. In terms of tissue distribution, ubiquitously expressed.

The protein resides in the membrane. Functionally, may play a role in the trafficking of a subset of G-protein coupled receptors. In Homo sapiens (Human), this protein is Protein odr-4 homolog.